A 311-amino-acid polypeptide reads, in one-letter code: Transcription initiation factor IIB (311 aa).

The segment at 11 to 42 (KETKCPECGSTKLINDHERGEVVCGACGLVID) adopts a TFIIB-type zinc-finger fold. 4 residues coordinate Zn(2+): Cys-15, Cys-18, Cys-34, and Cys-37. 2 consecutive repeat copies span residues 128-211 (SELD…TREL) and 222-303 (DYVP…ELTE).

This sequence belongs to the TFIIB family.

Stabilizes TBP binding to an archaeal box-A promoter. Also responsible for recruiting RNA polymerase II to the pre-initiation complex (DNA-TBP-TFIIB). The polypeptide is Transcription initiation factor IIB (Methanosphaera stadtmanae (strain ATCC 43021 / DSM 3091 / JCM 11832 / MCB-3)).